The chain runs to 2197 residues: RNA1 polyprotein (2197 aa).

Topologically, residues 621–1167 (GLTDVFGVPL…YDWVYANGGK (547 aa)) are cytoplasmic. Residues 766-933 (VKRLSDLHKR…EGVAYNPSDP (168 aa)) enclose the SF3 helicase domain. 796 to 803 (GGPRCGKS) serves as a coordination point for ATP. Residues 1168 to 1188 (LLLVLAAVILILFFGSACIKL) form a helical membrane-spanning segment. Topologically, residues 1189 to 1212 (MQAIFCGAAGGTVSMAAVGKMTVQ) are lumenal. The N-linked (GlcNAc...) asparagine; by host glycan is linked to Asn1228. The Peptidase C3 domain occupies 1243–1475 (LAEAQFNESH…MPRYISHASF (233 aa)). Catalysis depends on for picornain 3C-like protease activity residues His1283, Glu1331, and Cys1433. In terms of domain architecture, RdRp catalytic spans 1765-1888 (SVALNCDYSR…SIKPDTMKYF (124 aa)).

Belongs to the nepoviruses RNA1 polyprotein family. In terms of processing, specific enzymatic cleavages by picornain 3C-like protease in vivo yield mature proteins. Picornain 3C-like protease is autocatalytically processed. NTB exists as NTB-VPg polyprotein as well as NTB mature protein. VPg is uridylylated by the polymerase and is covalently linked to the 5'-end of genomic RNA. This uridylylated form acts as a nucleotide-peptide primer for the polymerase.

It is found in the host endoplasmic reticulum lumen. The protein resides in the host endoplasmic reticulum membrane. It catalyses the reaction RNA(n) + a ribonucleoside 5'-triphosphate = RNA(n+1) + diphosphate. In terms of biological role, picornain 3C-like protease is a thiol protease that cleaves at Gln-|-Gly or Gln-|-Ser sites in the P1 and P2 polyproteins. Functionally, the VPg-NTB polyprotein may act as a membrane-anchor for the replication complex. This Tomato ringspot virus (isolate raspberry) (ToRSV) protein is RNA1 polyprotein.